A 461-amino-acid polypeptide reads, in one-letter code: E3 ubiquitin-protein ligase TRIM15 (461 aa).

An RING-type zinc finger spans residues 12 to 57 (CSDCQGRLEDAVTAACGHTFCRLCLPLPPQMGAQPSSRVLLCPVCQ). The B box-type zinc-finger motif lies at 74–115 (LGETYCEEHGEKIYFFCENDAEFLCVFCREGPSHQAHAVGFL). Zn(2+) contacts are provided by C79, H82, C101, and H107. The stretch at 123-230 (RDRLRGRLEA…EKCQQPASEL (108 aa)) forms a coiled coil. The region spanning 272-461 (EMLRAFSENL…KKGSCLTLKG (190 aa)) is the B30.2/SPRY domain.

The protein belongs to the TRIM/RBCC family. In terms of assembly, interacts with paxillin/PXN; this interaction recruits TRIM15 to focal adhesions. Interacts with TRIM8; this interaction prevents TRIM8 cytoplasmic translocation.

The protein localises to the cytoplasm. Its subcellular location is the nucleus. It localises to the cell junction. The protein resides in the focal adhesion. The enzyme catalyses S-ubiquitinyl-[E2 ubiquitin-conjugating enzyme]-L-cysteine + [acceptor protein]-L-lysine = [E2 ubiquitin-conjugating enzyme]-L-cysteine + N(6)-ubiquitinyl-[acceptor protein]-L-lysine.. E3 ubiquitin ligase that plays a role in several processes including innate antiviral immnity, cell migration and chemotaxis. Acts as a 'Lys-63'-specific ubiquitin ligase for MAPK1/ERK2 and MAPK3/ERK1, promoting their activation by facilitating their interaction with MAP2K1 and MAP2K2. Also plays a role in cell migration and chemotaxis by acting as a stable focal adhesion component upon recruitment by multi-adapter protein paxillin/PXN. Functions in the RIGI-mediated interferon induction pathway upstream or at the level of MAVS. Inhibits NF-kappa-B activation by turnover of 'Lys-63'-linked ubiquitination of MAP3K7/TAK1. Mechanistically, prevents TRIM8 cytoplasmic translocation and thus inhibits TRIM8-mediated 'Lys-63'-linked polyubiquitination of MAP3K7/TAK1 in the cytoplasm. Also has an important regulatory effect on the activation of hepatic stellate cells (HSCs). This Sus scrofa (Pig) protein is E3 ubiquitin-protein ligase TRIM15 (TRIM15).